Reading from the N-terminus, the 126-residue chain is FCS-Like Zinc finger 17 (126 aa).

The segment at 41–85 (CFLKTCHLCNKQLHQDKDVYMYRGDLGFCSRECRESQMLIDDRKE) adopts an FLZ-type zinc-finger fold.

Belongs to the FLZ family. In terms of assembly, interacts with KIN10 and KIN11 via its FLZ-type zinc finger domain. Forms heterodimer with FLZ2 in vitro.

It is found in the nucleus. The protein resides in the cytoplasm. Its function is as follows. May act as an adapter to facilitate the interaction of SnRK1 complex with effector proteins, conferring tissue- and stimulus-type specific differences in the SnRK1 regulation pathway. In Arabidopsis thaliana (Mouse-ear cress), this protein is FCS-Like Zinc finger 17.